We begin with the raw amino-acid sequence, 272 residues long: NADPH-dependent 7-cyano-7-deazaguanine reductase (272 aa).

Substrate is bound at residue 82–84 (IES). An NADPH-binding site is contributed by 84-85 (SK). Catalysis depends on cysteine 178, which acts as the Thioimide intermediate. The Proton donor role is filled by aspartate 185. 217–218 (HE) serves as a coordination point for substrate. 246–247 (RG) is a binding site for NADPH.

It belongs to the GTP cyclohydrolase I family. QueF type 2 subfamily. As to quaternary structure, homodimer.

It is found in the cytoplasm. It catalyses the reaction 7-aminomethyl-7-carbaguanine + 2 NADP(+) = 7-cyano-7-deazaguanine + 2 NADPH + 3 H(+). It participates in tRNA modification; tRNA-queuosine biosynthesis. In terms of biological role, catalyzes the NADPH-dependent reduction of 7-cyano-7-deazaguanine (preQ0) to 7-aminomethyl-7-deazaguanine (preQ1). The chain is NADPH-dependent 7-cyano-7-deazaguanine reductase from Stenotrophomonas maltophilia (strain K279a).